A 445-amino-acid polypeptide reads, in one-letter code: Signal recognition particle 54 kDa protein (445 aa).

GTP-binding positions include 102-109, 184-188, and 244-247; these read GVQGSGKT, DTAGR, and TKMD.

Belongs to the GTP-binding SRP family. SRP54 subfamily. In terms of assembly, part of the signal recognition particle protein translocation system, which is composed of SRP and FtsY. Archaeal SRP consists of a 7S RNA molecule of 300 nucleotides and two protein subunits: SRP54 and SRP19.

It localises to the cytoplasm. It catalyses the reaction GTP + H2O = GDP + phosphate + H(+). In terms of biological role, involved in targeting and insertion of nascent membrane proteins into the cytoplasmic membrane. Binds to the hydrophobic signal sequence of the ribosome-nascent chain (RNC) as it emerges from the ribosomes. The SRP-RNC complex is then targeted to the cytoplasmic membrane where it interacts with the SRP receptor FtsY. In Sulfurisphaera tokodaii (strain DSM 16993 / JCM 10545 / NBRC 100140 / 7) (Sulfolobus tokodaii), this protein is Signal recognition particle 54 kDa protein.